We begin with the raw amino-acid sequence, 216 residues long: Serine acetyltransferase (216 aa).

Belongs to the transferase hexapeptide repeat family.

It localises to the cytoplasm. The enzyme catalyses L-serine + acetyl-CoA = O-acetyl-L-serine + CoA. It participates in amino-acid biosynthesis; L-cysteine biosynthesis; L-cysteine from L-serine: step 1/2. This Staphylococcus xylosus protein is Serine acetyltransferase (cysE).